We begin with the raw amino-acid sequence, 136 residues long: Orexigenic neuropeptide QRFP (136 aa).

Residues methionine 1–cysteine 18 form the signal peptide. A propeptide spanning residues phenylalanine 19–arginine 90 is cleaved from the precursor. Glutamine 91 bears the Pyrrolidone carboxylic acid mark. Phenylalanine 133 is modified (phenylalanine amide).

This sequence belongs to the RFamide neuropeptide family. As to quaternary structure, ligand for the G-protein coupled receptor QRFPR/GPR103. Expressed widely in the brain with highest expression levels in the cerebellum, medulla, pituitary, retina, vestibular nucleus, and white matter. Also expressed in the bladder, colon, coronary artery, parathyroid gland, prostate, testis, and thyroid.

The protein localises to the secreted. Stimulates feeding behavior, metabolic rate and locomotor activity and increases blood pressure. May have orexigenic activity. May promote aldosterone secretion by the adrenal gland. This is Orexigenic neuropeptide QRFP from Homo sapiens (Human).